A 286-amino-acid polypeptide reads, in one-letter code: Homoserine kinase (286 aa).

78-88 (PLARGLGSSSS) is a binding site for ATP.

The protein belongs to the GHMP kinase family. Homoserine kinase subfamily.

It is found in the cytoplasm. It catalyses the reaction L-homoserine + ATP = O-phospho-L-homoserine + ADP + H(+). The protein operates within amino-acid biosynthesis; L-threonine biosynthesis; L-threonine from L-aspartate: step 4/5. Functionally, catalyzes the ATP-dependent phosphorylation of L-homoserine to L-homoserine phosphate. In Streptococcus equi subsp. zooepidemicus (strain H70), this protein is Homoserine kinase.